Reading from the N-terminus, the 238-residue chain is Ribonuclease PH (238 aa).

Phosphate contacts are provided by residues R86 and 124–126 (GTR).

It belongs to the RNase PH family. Homohexameric ring arranged as a trimer of dimers.

The catalysed reaction is tRNA(n+1) + phosphate = tRNA(n) + a ribonucleoside 5'-diphosphate. Functionally, phosphorolytic 3'-5' exoribonuclease that plays an important role in tRNA 3'-end maturation. Removes nucleotide residues following the 3'-CCA terminus of tRNAs; can also add nucleotides to the ends of RNA molecules by using nucleoside diphosphates as substrates, but this may not be physiologically important. Probably plays a role in initiation of 16S rRNA degradation (leading to ribosome degradation) during starvation. This chain is Ribonuclease PH, found in Rhizorhabdus wittichii (strain DSM 6014 / CCUG 31198 / JCM 15750 / NBRC 105917 / EY 4224 / RW1) (Sphingomonas wittichii).